A 639-amino-acid chain; its full sequence is ATP-dependent zinc metalloprotease FtsH (639 aa).

Over 1-20 the chain is Cytoplasmic; sequence MNGNNNMNNNGKSNNKKKNK. Residues 21 to 41 traverse the membrane as a helical segment; sequence NWILGLVVVFLISAIFMSYFI. Residues 42–120 lie on the Periplasmic side of the membrane; the sequence is RGGESYKNVP…LSSGKSQASL (79 aa). A helical membrane pass occupies residues 121 to 141; it reads IGVLLQTLPWILFFIFFFFIF. The Cytoplasmic portion of the chain corresponds to 142–639; it reads RQTQGGGGKV…KEVKGEDVKG (498 aa). Residue 212–219 participates in ATP binding; sequence GSPGTGKT. His434 is a Zn(2+) binding site. The active site involves Glu435. Positions 438 and 510 each coordinate Zn(2+).

In the central section; belongs to the AAA ATPase family. It in the C-terminal section; belongs to the peptidase M41 family. As to quaternary structure, homohexamer. It depends on Zn(2+) as a cofactor.

The protein resides in the cell inner membrane. Acts as a processive, ATP-dependent zinc metallopeptidase for both cytoplasmic and membrane proteins. Plays a role in the quality control of integral membrane proteins. The sequence is that of ATP-dependent zinc metalloprotease FtsH from Borreliella burgdorferi (strain ZS7) (Borrelia burgdorferi).